The primary structure comprises 1227 residues: DNA-directed RNA polymerase subunit beta (1227 aa).

It belongs to the RNA polymerase beta chain family. The RNAP catalytic core consists of 2 alpha, 1 beta, 1 beta' and 1 omega subunit. When a sigma factor is associated with the core the holoenzyme is formed, which can initiate transcription.

The catalysed reaction is RNA(n) + a ribonucleoside 5'-triphosphate = RNA(n+1) + diphosphate. Its function is as follows. DNA-dependent RNA polymerase catalyzes the transcription of DNA into RNA using the four ribonucleoside triphosphates as substrates. This chain is DNA-directed RNA polymerase subunit beta, found in Chloroflexus aggregans (strain MD-66 / DSM 9485).